Consider the following 239-residue polypeptide: Small ribosomal subunit protein uS2 (239 aa).

It belongs to the universal ribosomal protein uS2 family.

The protein is Small ribosomal subunit protein uS2 of Synechococcus sp. (strain WH7803).